A 473-amino-acid polypeptide reads, in one-letter code: UDP-N-acetylmuramate--L-alanine ligase (473 aa).

123 to 129 serves as a coordination point for ATP; the sequence is GSHGKTS.

This sequence belongs to the MurCDEF family.

It localises to the cytoplasm. The enzyme catalyses UDP-N-acetyl-alpha-D-muramate + L-alanine + ATP = UDP-N-acetyl-alpha-D-muramoyl-L-alanine + ADP + phosphate + H(+). It functions in the pathway cell wall biogenesis; peptidoglycan biosynthesis. Its function is as follows. Cell wall formation. The polypeptide is UDP-N-acetylmuramate--L-alanine ligase (Prochlorococcus marinus subsp. pastoris (strain CCMP1986 / NIES-2087 / MED4)).